The following is a 178-amino-acid chain: Transcriptional repressor NrdR (178 aa).

Residues 1–21 are disordered; the sequence is MRCPFCGHEDTQVKDSRPHED. A zinc finger spans residues 3 to 34; the sequence is CPFCGHEDTQVKDSRPHEDGAAIRRRRICAAC. Residues 7 to 21 are compositionally biased toward basic and acidic residues; that stretch reads GHEDTQVKDSRPHED. The ATP-cone domain occupies 49 to 139; sequence LYVVKADDRR…VHWDFRETKD (91 aa).

It belongs to the NrdR family. Requires Zn(2+) as cofactor.

Its function is as follows. Negatively regulates transcription of bacterial ribonucleotide reductase nrd genes and operons by binding to NrdR-boxes. This Gluconacetobacter diazotrophicus (strain ATCC 49037 / DSM 5601 / CCUG 37298 / CIP 103539 / LMG 7603 / PAl5) protein is Transcriptional repressor NrdR.